A 202-amino-acid polypeptide reads, in one-letter code: Large ribosomal subunit protein bL25 (202 aa).

Residues 182-202 (QTAPEEEEGTAAETTEPELAE) are disordered. The segment covering 185–202 (PEEEEGTAAETTEPELAE) has biased composition (acidic residues).

This sequence belongs to the bacterial ribosomal protein bL25 family. CTC subfamily. In terms of assembly, part of the 50S ribosomal subunit; part of the 5S rRNA/L5/L18/L25 subcomplex. Contacts the 5S rRNA. Binds to the 5S rRNA independently of L5 and L18.

This is one of the proteins that binds to the 5S RNA in the ribosome where it forms part of the central protuberance. This Enterococcus faecalis (strain ATCC 700802 / V583) protein is Large ribosomal subunit protein bL25.